We begin with the raw amino-acid sequence, 363 residues long: tRNA(Met) cytidine acetate ligase (363 aa).

ATP-binding positions include Ile-7–Leu-20, Gly-96, Asn-152, and Arg-175.

It belongs to the TmcAL family.

It is found in the cytoplasm. The catalysed reaction is cytidine(34) in elongator tRNA(Met) + acetate + ATP = N(4)-acetylcytidine(34) in elongator tRNA(Met) + AMP + diphosphate. Its function is as follows. Catalyzes the formation of N(4)-acetylcytidine (ac(4)C) at the wobble position of elongator tRNA(Met), using acetate and ATP as substrates. First activates an acetate ion to form acetyladenylate (Ac-AMP) and then transfers the acetyl group to tRNA to form ac(4)C34. The sequence is that of tRNA(Met) cytidine acetate ligase from Streptococcus suis (strain 98HAH33).